Reading from the N-terminus, the 246-residue chain is C-X-C motif chemokine 16 (246 aa).

Positions 1 to 26 (MRRGFGPLSLAFFLFLLALLTLPGDG) are cleaved as a signal peptide. Residues 27-201 (NQGSVAGSCS…PGAGASTPAW (175 aa)) are Extracellular-facing. Intrachain disulfides connect Cys35-Cys65 and Cys37-Cys79. Disordered regions lie at residues 104 to 150 (GKSF…SGAL) and 175 to 198 (PEAE…GAST). Residues 128-146 (PSDTSTPAHSQSTQHSTLP) are compositionally biased toward polar residues. The segment covering 175–189 (PEAEANEKQQDDRQQ) has biased composition (basic and acidic residues). A helical membrane pass occupies residues 202-222 (VPVLSLLAIVFFLTAAMAYVL). Residues 223 to 246 (CNRRATQQNSAGLQLWYTPVEPRP) are Cytoplasmic-facing.

The protein belongs to the intercrine alpha (chemokine CxC) family. In terms of processing, glycosylated. Widely expressed. Not detected in purified B- and T-cells.

It is found in the membrane. Induces a strong chemotactic response. Induces calcium mobilization. Binds to CXCR6/Bonzo. Also acts as a scavenger receptor on macrophages, which specifically binds to OxLDL (oxidized low density lipoprotein), suggesting that it may be involved in pathophysiology such as atherogenesis. In Mus musculus (Mouse), this protein is C-X-C motif chemokine 16 (Cxcl16).